The following is a 283-amino-acid chain: Elongation factor Ts (283 aa).

An involved in Mg(2+) ion dislocation from EF-Tu region spans residues 80-83 (TDFV).

The protein belongs to the EF-Ts family.

It localises to the cytoplasm. Its function is as follows. Associates with the EF-Tu.GDP complex and induces the exchange of GDP to GTP. It remains bound to the aminoacyl-tRNA.EF-Tu.GTP complex up to the GTP hydrolysis stage on the ribosome. The chain is Elongation factor Ts from Haemophilus influenzae (strain PittGG).